Reading from the N-terminus, the 291-residue chain is 4-hydroxy-tetrahydrodipicolinate synthase (291 aa).

Pyruvate is bound at residue Thr44. Tyr132 functions as the Proton donor/acceptor in the catalytic mechanism. Lys160 acts as the Schiff-base intermediate with substrate in catalysis. Ile202 is a pyruvate binding site.

It belongs to the DapA family. In terms of assembly, homotetramer; dimer of dimers.

Its subcellular location is the cytoplasm. The enzyme catalyses L-aspartate 4-semialdehyde + pyruvate = (2S,4S)-4-hydroxy-2,3,4,5-tetrahydrodipicolinate + H2O + H(+). It functions in the pathway amino-acid biosynthesis; L-lysine biosynthesis via DAP pathway; (S)-tetrahydrodipicolinate from L-aspartate: step 3/4. Its function is as follows. Catalyzes the condensation of (S)-aspartate-beta-semialdehyde [(S)-ASA] and pyruvate to 4-hydroxy-tetrahydrodipicolinate (HTPA). This Sphingopyxis alaskensis (strain DSM 13593 / LMG 18877 / RB2256) (Sphingomonas alaskensis) protein is 4-hydroxy-tetrahydrodipicolinate synthase.